Reading from the N-terminus, the 80-residue chain is RNA-binding protein Hfq (80 aa).

Residues 10–70 enclose the Sm domain; it reads DLFLNTVRKQ…ISTIMPGQPM (61 aa).

Belongs to the Hfq family. Homohexamer.

RNA chaperone that binds small regulatory RNA (sRNAs) and mRNAs to facilitate mRNA translational regulation in response to envelope stress, environmental stress and changes in metabolite concentrations. Also binds with high specificity to tRNAs. This chain is RNA-binding protein Hfq, found in Rhizobium rhizogenes (strain K84 / ATCC BAA-868) (Agrobacterium radiobacter).